The sequence spans 334 residues: MEEPMEVDNKRPKVLTWTEKYRPKTLDDIAYQDEVVTMLKGALQGRDLPHLLFYGPPGTGKTSAALAFCRQLFPKNIFHDRVLDLNASDERGIAVVRQKIQSFSKSSLGHSHREDVLKLKIIILDEVDAMTREAQAAMRRVIEDFSKTTRFILICNYVSRLIPPVVSRCAKFRFKSLPAEIQVQRLRTICDAEGTPMSDDELKQVMEYSEGDLRRAVCTLQSLAPILKSGDDNARNCYLRGSSDSLLISNVCKSILTADVPQIIALTKDITKSCTGVAFIRRCFQQLMDEDVINDENIGVMGKLVATCEKRILDGCDLENNLLDFLLTLRETIQ.

An ATP-binding site is contributed by Gly-55 to Thr-62.

This sequence belongs to the activator 1 small subunits family. Heteropentamer of various rfc subunits that forms a complex (RFC) with PCNA in the presence of ATP.

The protein localises to the nucleus. In terms of biological role, the elongation of primed DNA templates by DNA polymerase delta and epsilon requires the action of the accessory proteins PCNA and activator 1. This subunit may be involved in the elongation of the multiprimed DNA template. The protein is Replication factor C subunit 4 (rfc-4) of Caenorhabditis elegans.